Reading from the N-terminus, the 208-residue chain is Small ribosomal subunit protein uS4 (208 aa).

The 62-residue stretch at 97–158 (TRLDNVIYRM…RAQKYLCVQE (62 aa)) folds into the S4 RNA-binding domain.

Belongs to the universal ribosomal protein uS4 family. As to quaternary structure, part of the 30S ribosomal subunit. Contacts protein S5. The interaction surface between S4 and S5 is involved in control of translational fidelity.

In terms of biological role, one of the primary rRNA binding proteins, it binds directly to 16S rRNA where it nucleates assembly of the body of the 30S subunit. Functionally, with S5 and S12 plays an important role in translational accuracy. This is Small ribosomal subunit protein uS4 from Xylella fastidiosa (strain 9a5c).